Reading from the N-terminus, the 397-residue chain is Glutamate 5-kinase (397 aa).

The segment at 1 to 28 is disordered; the sequence is MVADLTSDISESQEQETETNSANNNGAV. K40 serves as a coordination point for ATP. Substrate contacts are provided by S80, D168, and N180. ATP-binding positions include 200 to 201 and 243 to 249; these read SD and SGGMASK. A PUA domain is found at 306 to 383; sequence HGQVYIDQGA…QEIADILGYE (78 aa).

The protein belongs to the glutamate 5-kinase family.

It is found in the cytoplasm. It carries out the reaction L-glutamate + ATP = L-glutamyl 5-phosphate + ADP. The protein operates within amino-acid biosynthesis; L-proline biosynthesis; L-glutamate 5-semialdehyde from L-glutamate: step 1/2. Catalyzes the transfer of a phosphate group to glutamate to form L-glutamate 5-phosphate. The chain is Glutamate 5-kinase from Zymomonas mobilis subsp. mobilis (strain ATCC 31821 / ZM4 / CP4).